A 443-amino-acid polypeptide reads, in one-letter code: Monooxygenase asqM (443 aa).

The protein belongs to the aromatic-ring hydroxylase family. It depends on FAD as a cofactor.

It participates in secondary metabolite biosynthesis. It functions in the pathway alkaloid biosynthesis. Its pathway is mycotoxin biosynthesis. In terms of biological role, monooxygenase; part of the gene cluster that mediates the biosynthesis of the aspoquinolone mycotoxins. The role of asqM within the aspoquinolone pathway has still to be determined. The first step of the pathway is catalyzed by the nonribosomal peptide synthetase asqK that condenses anthranilic acid and O-methyl-L-tyrosine to produce 4'-methoxycyclopeptin. 4'-methoxycyclopeptin is then converted to 4'-methoxydehydrocyclopeptin by the ketoglutarate-dependent dioxygenase asqJ. AsqJ also converts its first product 4'-methoxydehydrocyclopeptin to 4'-methoxycyclopenin. The following conversion of 4'-methoxycyclopenin into 4'-methoxyviridicatin is catalyzed by the cyclopenase asqI. 4'-methoxyviridicatin is the precursor of quinolone natural products, and is further converted to quinolinone B. The prenyltransferase asqH1 then catalyzes the canonical Friedel-Crafts alkylation of quinolinone B with dimethylallyl cation to yield dimethylallyl quinolone, which is subjected to FAD-dependent dehydrogenation by the FAD-linked oxidoreductase asqF to yield conjugated aryl diene. The delta(3') double bond then serves as the site of the second alkylation with DMAPP catalyzed by the prenyltransferase asqH2 to yield a carbenium ion intermediate, which can be attacked by H(2)O to yield a styrenyl quinolone containing a C3'-hydroxyprenyl chain. The FAD-dependent monooxygenase asqG performs epoxidation of the terminal C7'-C8' olefin. Finally, after dehydratation of the epoxide at C3 by asqC, the quinolone epoxide rearrangement protein asqO catalyzes an enzymatic 3-exo-tet cyclization to yield the cyclopropyl-THF ring system in aspoquinolone. This is Monooxygenase asqM from Emericella nidulans (strain FGSC A4 / ATCC 38163 / CBS 112.46 / NRRL 194 / M139) (Aspergillus nidulans).